The sequence spans 231 residues: MEKDLHLHEKKCLAHEAATQVTSGMILGLGSGSTAKEFIFALAHRIQTESLAVHAIASSQNSYALAKQLAIPLLNPEKFSSLDLTVDGADEVDPQLRMIKGGGGAIFREKILLRAAKRSIILVDESKLVPVLGKFRVPLEISRFGRSAIIEEIRHLGYEGEWRLQDTGDLFITDSSNYIYDIFSPNSYPNPEKDLLKLIQIHGVIEVGFVIEKVEVWSSNSQGLISKKYSV.

Substrate-binding positions include 31 to 34 (SGST), 87 to 90 (DGAD), and 100 to 103 (KGGG). The active-site Proton acceptor is E109. K127 contacts substrate.

This sequence belongs to the ribose 5-phosphate isomerase family. In terms of assembly, homodimer.

The enzyme catalyses aldehydo-D-ribose 5-phosphate = D-ribulose 5-phosphate. It functions in the pathway carbohydrate degradation; pentose phosphate pathway; D-ribose 5-phosphate from D-ribulose 5-phosphate (non-oxidative stage): step 1/1. Its function is as follows. Catalyzes the reversible conversion of ribose-5-phosphate to ribulose 5-phosphate. In Chlamydia pneumoniae (Chlamydophila pneumoniae), this protein is Ribose-5-phosphate isomerase A.